Consider the following 316-residue polypeptide: 4-hydroxy-3-methylbut-2-enyl diphosphate reductase (316 aa).

Residue Cys-12 participates in [4Fe-4S] cluster binding. The (2E)-4-hydroxy-3-methylbut-2-enyl diphosphate site is built by His-41 and His-74. Dimethylallyl diphosphate is bound by residues His-41 and His-74. Residues His-41 and His-74 each contribute to the isopentenyl diphosphate site. A [4Fe-4S] cluster-binding site is contributed by Cys-96. His-124 serves as a coordination point for (2E)-4-hydroxy-3-methylbut-2-enyl diphosphate. His-124 is a dimethylallyl diphosphate binding site. His-124 lines the isopentenyl diphosphate pocket. The active-site Proton donor is the Glu-126. (2E)-4-hydroxy-3-methylbut-2-enyl diphosphate is bound at residue Thr-169. Residue Cys-199 participates in [4Fe-4S] cluster binding. Positions 227, 228, 229, and 271 each coordinate (2E)-4-hydroxy-3-methylbut-2-enyl diphosphate. Residues Ser-227, Ser-228, Asn-229, and Ser-271 each contribute to the dimethylallyl diphosphate site. 4 residues coordinate isopentenyl diphosphate: Ser-227, Ser-228, Asn-229, and Ser-271.

It belongs to the IspH family. Requires [4Fe-4S] cluster as cofactor.

The enzyme catalyses isopentenyl diphosphate + 2 oxidized [2Fe-2S]-[ferredoxin] + H2O = (2E)-4-hydroxy-3-methylbut-2-enyl diphosphate + 2 reduced [2Fe-2S]-[ferredoxin] + 2 H(+). It catalyses the reaction dimethylallyl diphosphate + 2 oxidized [2Fe-2S]-[ferredoxin] + H2O = (2E)-4-hydroxy-3-methylbut-2-enyl diphosphate + 2 reduced [2Fe-2S]-[ferredoxin] + 2 H(+). It functions in the pathway isoprenoid biosynthesis; dimethylallyl diphosphate biosynthesis; dimethylallyl diphosphate from (2E)-4-hydroxy-3-methylbutenyl diphosphate: step 1/1. The protein operates within isoprenoid biosynthesis; isopentenyl diphosphate biosynthesis via DXP pathway; isopentenyl diphosphate from 1-deoxy-D-xylulose 5-phosphate: step 6/6. In terms of biological role, catalyzes the conversion of 1-hydroxy-2-methyl-2-(E)-butenyl 4-diphosphate (HMBPP) into a mixture of isopentenyl diphosphate (IPP) and dimethylallyl diphosphate (DMAPP). Acts in the terminal step of the DOXP/MEP pathway for isoprenoid precursor biosynthesis. The sequence is that of 4-hydroxy-3-methylbut-2-enyl diphosphate reductase from Vibrio cholerae serotype O1 (strain ATCC 39315 / El Tor Inaba N16961).